We begin with the raw amino-acid sequence, 179 residues long: ATP synthase subunit delta (179 aa).

It belongs to the ATPase delta chain family. As to quaternary structure, F-type ATPases have 2 components, F(1) - the catalytic core - and F(0) - the membrane proton channel. F(1) has five subunits: alpha(3), beta(3), gamma(1), delta(1), epsilon(1). F(0) has three main subunits: a(1), b(2) and c(10-14). The alpha and beta chains form an alternating ring which encloses part of the gamma chain. F(1) is attached to F(0) by a central stalk formed by the gamma and epsilon chains, while a peripheral stalk is formed by the delta and b chains.

The protein localises to the cell membrane. Its function is as follows. F(1)F(0) ATP synthase produces ATP from ADP in the presence of a proton or sodium gradient. F-type ATPases consist of two structural domains, F(1) containing the extramembraneous catalytic core and F(0) containing the membrane proton channel, linked together by a central stalk and a peripheral stalk. During catalysis, ATP synthesis in the catalytic domain of F(1) is coupled via a rotary mechanism of the central stalk subunits to proton translocation. In terms of biological role, this protein is part of the stalk that links CF(0) to CF(1). It either transmits conformational changes from CF(0) to CF(1) or is implicated in proton conduction. In Mycoplasmopsis pulmonis (strain UAB CTIP) (Mycoplasma pulmonis), this protein is ATP synthase subunit delta.